The chain runs to 225 residues: Ribose-5-phosphate isomerase A (225 aa).

Residues 1–20 are disordered; it reads MKQSGGTEAQKRRAGKQAAD. Substrate contacts are provided by residues 32-35, 86-89, and 98-101; these read TGST, DGAD, and KGGG. Residue glutamate 107 is the Proton acceptor of the active site. A substrate-binding site is contributed by lysine 125.

It belongs to the ribose 5-phosphate isomerase family. Homodimer.

The catalysed reaction is aldehydo-D-ribose 5-phosphate = D-ribulose 5-phosphate. It functions in the pathway carbohydrate degradation; pentose phosphate pathway; D-ribose 5-phosphate from D-ribulose 5-phosphate (non-oxidative stage): step 1/1. Its function is as follows. Catalyzes the reversible conversion of ribose-5-phosphate to ribulose 5-phosphate. The protein is Ribose-5-phosphate isomerase A of Natronomonas pharaonis (strain ATCC 35678 / DSM 2160 / CIP 103997 / JCM 8858 / NBRC 14720 / NCIMB 2260 / Gabara) (Halobacterium pharaonis).